The primary structure comprises 252 residues: Phosphate import ATP-binding protein PstB (252 aa).

Residues 5–247 enclose the ABC transporter domain; the sequence is LIASDVNIFY…PRDERTEAYV (243 aa). 37-44 contacts ATP; it reads GPSGCGKT.

Belongs to the ABC transporter superfamily. Phosphate importer (TC 3.A.1.7) family. The complex is composed of two ATP-binding proteins (PstB), two transmembrane proteins (PstC and PstA) and a solute-binding protein (PstS).

Its subcellular location is the cell membrane. It catalyses the reaction phosphate(out) + ATP + H2O = ADP + 2 phosphate(in) + H(+). Its function is as follows. Part of the ABC transporter complex PstSACB involved in phosphate import. Responsible for energy coupling to the transport system. The polypeptide is Phosphate import ATP-binding protein PstB (Deinococcus geothermalis (strain DSM 11300 / CIP 105573 / AG-3a)).